A 373-amino-acid polypeptide reads, in one-letter code: Secondary metabolism regulator laeA (373 aa).

The interval 55 to 81 is disordered; that stretch reads ERDPAAGRWHANGSPSINSTSSKNPDR. Residues 67-77 are compositionally biased toward polar residues; the sequence is GSPSINSTSSK.

The protein belongs to the methyltransferase superfamily. LaeA methyltransferase family. As to quaternary structure, component of the heterotrimeric velvet complex composed of laeA, veA and velB; VeA acting as a bridging protein between laeA and velB.

Its subcellular location is the nucleus. The enzyme catalyses L-methionyl-[protein] + S-adenosyl-L-methionine = S-methyl-L-methionyl-[protein] + S-adenosyl-L-homocysteine. Functionally, methyltransferase that performs automethylation. No other methyl-accepting substrate has been identified yet. Component of the velvet transcription factor complex that acts as a global regulator for secondary metabolite gene expression. Positively controls expression of 20% to 40% of major classes of secondary metabolite biosynthesis genes such as nonribosomal peptide synthetases, polyketide synthases, and P450 monooxygenases. Controls the expression of the gliotoxin gene cluster. Controls the expression of the fumitremorgin, fumagillin, and pseurotin gene clusters, where genes for fumagillin and pseurotin are physically intertwined in a single supercluster. Regulates the biosynthetic genes required for endocrocin production. Secondary metabolites under the transcriptional regulation of laeA are necessary for inhibition of angiogenesis during invasive infection in mice. Controls the expression of cell surface rodA, a hydrophobin that acts as an antiphagocytic molecule. Also regulates the expression of genes involved in conidial biosynthesis. The polypeptide is Secondary metabolism regulator laeA (Aspergillus fumigatus (strain ATCC MYA-4609 / CBS 101355 / FGSC A1100 / Af293) (Neosartorya fumigata)).